The chain runs to 654 residues: Fructose-1,6-bisphosphatase class 3 (654 aa).

A disordered region spans residues 288–307 (NPAFKPKKRPDKHERLTQRE). Over residues 298–307 (DKHERLTQRE) the composition is skewed to basic and acidic residues.

This sequence belongs to the FBPase class 3 family. Mn(2+) serves as cofactor.

The catalysed reaction is beta-D-fructose 1,6-bisphosphate + H2O = beta-D-fructose 6-phosphate + phosphate. The protein operates within carbohydrate biosynthesis; gluconeogenesis. The protein is Fructose-1,6-bisphosphatase class 3 of Staphylococcus aureus (strain MRSA252).